A 272-amino-acid polypeptide reads, in one-letter code: Putative MgpC-like protein MPN_366 (272 aa).

Disordered regions lie at residues 65-84 (QESQ…TSGS) and 171-196 (GSGQ…PMPS). Positions 72-84 (NGSQSGSSDTSGS) are enriched in low complexity. Polar residues predominate over residues 173-187 (GQESSWNSQRSQKGL).

This sequence belongs to the MgpC family.

The sequence is that of Putative MgpC-like protein MPN_366 from Mycoplasma pneumoniae (strain ATCC 29342 / M129 / Subtype 1) (Mycoplasmoides pneumoniae).